The primary structure comprises 130 residues: Small ribosomal subunit protein uS9 (130 aa).

A compositionally biased stretch (basic and acidic residues) spans 105-115; the sequence is TRDSRQVERKK. The interval 105–130 is disordered; that stretch reads TRDSRQVERKKVGFRKSRKRTQFSKR. Basic residues predominate over residues 116 to 130; the sequence is VGFRKSRKRTQFSKR.

This sequence belongs to the universal ribosomal protein uS9 family.

In Buchnera aphidicola subsp. Schizaphis graminum (strain Sg), this protein is Small ribosomal subunit protein uS9.